We begin with the raw amino-acid sequence, 118 residues long: Small ribosomal subunit protein uS13 (118 aa).

The segment at 91–118 (HRRSLPVRGQRTKTNARTRKGPRKPIKA) is disordered.

This sequence belongs to the universal ribosomal protein uS13 family. Part of the 30S ribosomal subunit. Forms a loose heterodimer with protein S19. Forms two bridges to the 50S subunit in the 70S ribosome.

Located at the top of the head of the 30S subunit, it contacts several helices of the 16S rRNA. In the 70S ribosome it contacts the 23S rRNA (bridge B1a) and protein L5 of the 50S subunit (bridge B1b), connecting the 2 subunits; these bridges are implicated in subunit movement. Contacts the tRNAs in the A and P-sites. This is Small ribosomal subunit protein uS13 from Francisella philomiragia subsp. philomiragia (strain ATCC 25017 / CCUG 19701 / FSC 153 / O#319-036).